Consider the following 306-residue polypeptide: Glutamyl-Q tRNA(Asp) synthetase (306 aa).

L-glutamate is bound by residues 29–33 (RFAPS) and Asp65. A 'HIGH' region motif is present at residues 32 to 42 (PSPTGPLHLGN). Positions 121, 123, 141, and 145 each coordinate Zn(2+). 2 residues coordinate L-glutamate: Tyr188 and Arg206. The 'KMSKS' region signature appears at 244 to 248 (KLAKR). Lys247 contributes to the ATP binding site.

The protein belongs to the class-I aminoacyl-tRNA synthetase family. GluQ subfamily. It depends on Zn(2+) as a cofactor.

Functionally, catalyzes the tRNA-independent activation of glutamate in presence of ATP and the subsequent transfer of glutamate onto a tRNA(Asp). Glutamate is transferred on the 2-amino-5-(4,5-dihydroxy-2-cyclopenten-1-yl) moiety of the queuosine in the wobble position of the QUC anticodon. This Prochlorococcus marinus (strain MIT 9303) protein is Glutamyl-Q tRNA(Asp) synthetase.